The following is a 268-amino-acid chain: Tryptophan synthase alpha chain (268 aa).

Catalysis depends on proton acceptor residues E47 and D58.

Belongs to the TrpA family. As to quaternary structure, tetramer of two alpha and two beta chains.

The catalysed reaction is (1S,2R)-1-C-(indol-3-yl)glycerol 3-phosphate + L-serine = D-glyceraldehyde 3-phosphate + L-tryptophan + H2O. It functions in the pathway amino-acid biosynthesis; L-tryptophan biosynthesis; L-tryptophan from chorismate: step 5/5. Its function is as follows. The alpha subunit is responsible for the aldol cleavage of indoleglycerol phosphate to indole and glyceraldehyde 3-phosphate. The sequence is that of Tryptophan synthase alpha chain from Chlorobium phaeobacteroides (strain BS1).